A 449-amino-acid polypeptide reads, in one-letter code: Phosphoglucosamine mutase (449 aa).

Ser101 (phosphoserine intermediate) is an active-site residue. Mg(2+)-binding residues include Ser101, Asp241, Asp243, and Asp245. Ser101 bears the Phosphoserine mark.

This sequence belongs to the phosphohexose mutase family. Mg(2+) serves as cofactor. In terms of processing, activated by phosphorylation.

It catalyses the reaction alpha-D-glucosamine 1-phosphate = D-glucosamine 6-phosphate. In terms of biological role, catalyzes the conversion of glucosamine-6-phosphate to glucosamine-1-phosphate. The sequence is that of Phosphoglucosamine mutase from Ruminiclostridium cellulolyticum (strain ATCC 35319 / DSM 5812 / JCM 6584 / H10) (Clostridium cellulolyticum).